We begin with the raw amino-acid sequence, 291 residues long: Probable L-ascorbate peroxidase 4, peroxisomal (291 aa).

H40 serves as the catalytic Proton acceptor. H160 lines the heme b pocket. Residues T161, T177, and D184 each coordinate K(+). The chain crosses the membrane as a helical span at residues 263–283 (VLAQSAVGVAVAAAVVIVSYL).

Belongs to the peroxidase family. Ascorbate peroxidase subfamily. Requires heme b as cofactor. Expressed in leaves, stems and flowers.

The protein resides in the peroxisome membrane. The enzyme catalyses L-ascorbate + H2O2 = L-dehydroascorbate + 2 H2O. In terms of biological role, plays a key role in hydrogen peroxide removal. The protein is Probable L-ascorbate peroxidase 4, peroxisomal of Oryza sativa subsp. japonica (Rice).